Reading from the N-terminus, the 485-residue chain is Protein disulfide isomerase-like 5-4 (485 aa).

A Thioredoxin domain is found at 114 to 263 (VPTGSEFHPG…LVAAMETYVA (150 aa)). The Nucleophile role is filled by cysteine 170. A helical membrane pass occupies residues 444-464 (FSHFITNVCAIIGGVFTVAGI).

It belongs to the protein disulfide isomerase family.

Its subcellular location is the membrane. In terms of biological role, acts as a protein-folding catalyst that interacts with nascent polypeptides to catalyze the formation, isomerization, and reduction or oxidation of disulfide bonds. May play a role in storage protein biogenesis. This Oryza sativa subsp. japonica (Rice) protein is Protein disulfide isomerase-like 5-4 (PDIL5-4).